The following is a 101-amino-acid chain: NAD(P)H-quinone oxidoreductase subunit 4L, chloroplastic (101 aa).

Helical transmembrane passes span 2–22 (MFER…YGLI), 32–52 (ICLE…SDLF), and 61–81 (IFAI…LSIL).

This sequence belongs to the complex I subunit 4L family. NDH is composed of at least 16 different subunits, 5 of which are encoded in the nucleus.

It is found in the plastid. Its subcellular location is the chloroplast thylakoid membrane. The catalysed reaction is a plastoquinone + NADH + (n+1) H(+)(in) = a plastoquinol + NAD(+) + n H(+)(out). It catalyses the reaction a plastoquinone + NADPH + (n+1) H(+)(in) = a plastoquinol + NADP(+) + n H(+)(out). NDH shuttles electrons from NAD(P)H:plastoquinone, via FMN and iron-sulfur (Fe-S) centers, to quinones in the photosynthetic chain and possibly in a chloroplast respiratory chain. The immediate electron acceptor for the enzyme in this species is believed to be plastoquinone. Couples the redox reaction to proton translocation, and thus conserves the redox energy in a proton gradient. The protein is NAD(P)H-quinone oxidoreductase subunit 4L, chloroplastic of Zea mays (Maize).